Consider the following 1418-residue polypeptide: Protein ced-11 (1418 aa).

7 helical membrane passes run 617-637, 755-775, 782-802, 818-838, 856-876, 898-918, and 986-1006; these read FPIFLPKWAKICISAVLIIPV, YWLSLLFRIVFICCLAYSVVL, LWDTGMWVWSFFWWIENCFVL, VFDVFAFFVFLILLLVMKVFP, VVSAFFVLYVSYSTLFTYIPL, FLFMIALVMLSSAVAIQAVVF, and IVIEYFVILKLLLWPILFAFF.

The protein localises to the membrane. Its function is as follows. Plays a major role in programmed cell death. In Caenorhabditis elegans, this protein is Protein ced-11 (ced-11).